Consider the following 704-residue polypeptide: MEQLSYQSKLICSDESRHTGCFTTLPIRIHPRDDLADAASRRFVQDWAREMRDGREQSTHFSFSPVGNWSSLIYPEAIPERLGVLAYLSDLGLIHDDGGEGLSIEDAQAEHGELCAALDPSDISSAAPGSRAMKTKKLVSQCMLECISLDRELGLKMLAAFRDVWLAISERNSDKEAQTMEEYLKYRSDNGGMLVFWPMLQFSLGMSISEAEEALVQPIIDAATEGLLLANDYFSWEREYRELQSGQSKRIVSAVDLFIRTKGLSIDDAKEEVKRKIIAAERDFCQRRDDLYTNHPNIPLKLKRWIDCAGLAVSGNHYWCSACPRQNAWKDMSSQSLNGAKRKTSHGATIGMHEAPFKKRKDSSFFGSQPSDDEPSLSEVSSYPFYKPSGLALEAPSKYVSDMPSKGVRSTLIEALNTWLHVPSERLDSIMSVINTLHNASLILDDLEDNSPLRRGYPATHILFGHSQSINTANFMFVRAVQEVAQNLSPNALVALLEELKGLYLGQSWDLYWKHNLACPSEAEYVNMIDHKTGGMFRMLLRIMQAESDVTPQPDFHRLTLLFGRFFQIRDDYMNFQDYTAQKGLCEDLDEGKFSYPVVYCLENHPEYRGYFLSMFRQRPTIATVNACPLSGESKQYLTACLKKSGAFNKTIACLTDMERDLEFEINRLEQQTGETNPMLRLCLAKLSVKGIGRIGEVSPSTSK.

The segment at 1-329 (MEQLSYQSKL…CSACPRQNAW (329 aa)) is terpene cyclase. D96 contacts Mg(2+). Substrate is bound by residues D96, N231, 235-239 (SWERE), and 325-326 (RQ). Positions 96-100 (DDGGE) match the DDXXD 1 motif. The short motif at 231 to 239 (NDYFSWERE) is the NSE/DTE element. Positions 330–688 (KDMSSQSLNG…MLRLCLAKLS (359 aa)) are prenyltransferase. Residues 361-380 (KDSSFFGSQPSDDEPSLSEV) are disordered. Residues K406, R409, and H438 each coordinate isopentenyl diphosphate. Residues D445 and D449 each contribute to the Mg(2+) site. The short motif at 445–449 (DDLED) is the DDXXD 2 element. R454 serves as a coordination point for dimethylallyl diphosphate. R455 lines the isopentenyl diphosphate pocket. Positions 532, 533, 568, 575, 583, and 593 each coordinate dimethylallyl diphosphate.

The protein in the N-terminal section; belongs to the terpene synthase family. It in the C-terminal section; belongs to the FPP/GGPP synthase family. As to quaternary structure, hexamer. Mg(2+) is required as a cofactor.

It carries out the reaction isopentenyl diphosphate + (2E,6E)-farnesyl diphosphate = (2E,6E,10E)-geranylgeranyl diphosphate + diphosphate. It catalyses the reaction isopentenyl diphosphate + (2E,6E,10E)-geranylgeranyl diphosphate = (2E,6E,10E,14E)-geranylfarnesyl diphosphate + diphosphate. It functions in the pathway secondary metabolite biosynthesis; terpenoid biosynthesis. In terms of biological role, bifunctional terpene synthase; part of the gene cluster that mediates the biosynthesis of terpestacin. The bifunctional terpene synthase tpcA converts isopentenyl diphosphate (IPP) and dimethylallyl diphosphate (DMAPP) into the sesterterpene preterpestacin I. The C-terminal prenyltransferase (PT) domain of tpcA catalyzes formation of GFPP, whereas the N-terminal terpene cyclase (TC) domain catalyzes the cyclization of GFPP into preterpestacin I. The cytochrome P450 monooxygenase tpcB then hydroxylates preterpestacin I to yield 24-hydroxypreterpstacin I (renamed as preterpestacin II) whereas the cytochrome P450 monooxygenase tpcC further hydroxylates preterpestacin II to yield 16,17-dihydroxypreterpestacin II (renamed as preterpestacin III). Finally, the FAD-dependent monooxygenase tpcD converts preterpestacin III into terpestacin. This is Preterpestacin I synthase tpcA from Cochliobolus heterostrophus (strain C5 / ATCC 48332 / race O) (Southern corn leaf blight fungus).